Here is a 537-residue protein sequence, read N- to C-terminus: Protein ST7 homolog (537 aa).

Residues F15 to W35 traverse the membrane as a helical segment. The segment at S61 to M111 is disordered. The span at S67–N84 shows a compositional bias: low complexity. Residues G85 to G99 show a composition bias toward gly residues. Low complexity predominate over residues S100 to T109. The helical transmembrane segment at L472–A492 threads the bilayer.

Belongs to the ST7 family.

The protein resides in the membrane. In Drosophila melanogaster (Fruit fly), this protein is Protein ST7 homolog.